The chain runs to 618 residues: Dihydroxy-acid dehydratase 1 (618 aa).

Aspartate 81 lines the Mg(2+) pocket. Cysteine 122 is a binding site for [2Fe-2S] cluster. The Mg(2+) site is built by aspartate 123 and lysine 124. Lysine 124 carries the post-translational modification N6-carboxylysine. Residue cysteine 195 coordinates [2Fe-2S] cluster. Glutamate 491 is a Mg(2+) binding site. The Proton acceptor role is filled by serine 517.

It belongs to the IlvD/Edd family. Homodimer. It depends on [2Fe-2S] cluster as a cofactor. Requires Mg(2+) as cofactor.

The catalysed reaction is (2R)-2,3-dihydroxy-3-methylbutanoate = 3-methyl-2-oxobutanoate + H2O. It carries out the reaction (2R,3R)-2,3-dihydroxy-3-methylpentanoate = (S)-3-methyl-2-oxopentanoate + H2O. Its pathway is amino-acid biosynthesis; L-isoleucine biosynthesis; L-isoleucine from 2-oxobutanoate: step 3/4. The protein operates within amino-acid biosynthesis; L-valine biosynthesis; L-valine from pyruvate: step 3/4. In terms of biological role, functions in the biosynthesis of branched-chain amino acids. Catalyzes the dehydration of (2R,3R)-2,3-dihydroxy-3-methylpentanoate (2,3-dihydroxy-3-methylvalerate) into 2-oxo-3-methylpentanoate (2-oxo-3-methylvalerate) and of (2R)-2,3-dihydroxy-3-methylbutanoate (2,3-dihydroxyisovalerate) into 2-oxo-3-methylbutanoate (2-oxoisovalerate), the penultimate precursor to L-isoleucine and L-valine, respectively. The polypeptide is Dihydroxy-acid dehydratase 1 (Pseudoalteromonas translucida (strain TAC 125)).